The primary structure comprises 90 residues: Small ribosomal subunit protein uS15 (90 aa).

It belongs to the universal ribosomal protein uS15 family. Part of the 30S ribosomal subunit. Forms a bridge to the 50S subunit in the 70S ribosome, contacting the 23S rRNA.

Functionally, one of the primary rRNA binding proteins, it binds directly to 16S rRNA where it helps nucleate assembly of the platform of the 30S subunit by binding and bridging several RNA helices of the 16S rRNA. Forms an intersubunit bridge (bridge B4) with the 23S rRNA of the 50S subunit in the ribosome. In Wolbachia pipientis wMel, this protein is Small ribosomal subunit protein uS15.